Consider the following 648-residue polypeptide: Biosynthetic arginine decarboxylase (648 aa).

Lys109 is modified (N6-(pyridoxal phosphate)lysine). 291–301 (IDVGGGLGIDF) provides a ligand contact to substrate.

It belongs to the Orn/Lys/Arg decarboxylase class-II family. SpeA subfamily. Mg(2+) is required as a cofactor. It depends on pyridoxal 5'-phosphate as a cofactor.

The catalysed reaction is L-arginine + H(+) = agmatine + CO2. It participates in amine and polyamine biosynthesis; agmatine biosynthesis; agmatine from L-arginine: step 1/1. Catalyzes the biosynthesis of agmatine from arginine. This is Biosynthetic arginine decarboxylase from Prochlorococcus marinus (strain MIT 9215).